Reading from the N-terminus, the 454-residue chain is Bifunctional protein GlmU (454 aa).

The interval 1 to 231 (MDRATVSLIV…EAETLGVNTR (231 aa)) is pyrophosphorylase. UDP-N-acetyl-alpha-D-glucosamine-binding positions include 11-14 (LAAG), K25, Q78, 83-84 (GT), 106-108 (YGD), G143, E157, N172, and N229. Mg(2+) is bound at residue D108. N229 lines the Mg(2+) pocket. The interval 232–252 (AQLAEAEAEFQKRARAAALED) is linker. The interval 253 to 454 (GVTLTAPDTV…AKAAKKKEAP (202 aa)) is N-acetyltransferase. R318 and K336 together coordinate UDP-N-acetyl-alpha-D-glucosamine. The active-site Proton acceptor is the H348. UDP-N-acetyl-alpha-D-glucosamine is bound by residues Y351 and N362. Acetyl-CoA contacts are provided by residues A365, 371-372 (NY), S390, S408, and R425.

In the N-terminal section; belongs to the N-acetylglucosamine-1-phosphate uridyltransferase family. It in the C-terminal section; belongs to the transferase hexapeptide repeat family. Homotrimer. The cofactor is Mg(2+).

It is found in the cytoplasm. It carries out the reaction alpha-D-glucosamine 1-phosphate + acetyl-CoA = N-acetyl-alpha-D-glucosamine 1-phosphate + CoA + H(+). It catalyses the reaction N-acetyl-alpha-D-glucosamine 1-phosphate + UTP + H(+) = UDP-N-acetyl-alpha-D-glucosamine + diphosphate. The protein operates within nucleotide-sugar biosynthesis; UDP-N-acetyl-alpha-D-glucosamine biosynthesis; N-acetyl-alpha-D-glucosamine 1-phosphate from alpha-D-glucosamine 6-phosphate (route II): step 2/2. It participates in nucleotide-sugar biosynthesis; UDP-N-acetyl-alpha-D-glucosamine biosynthesis; UDP-N-acetyl-alpha-D-glucosamine from N-acetyl-alpha-D-glucosamine 1-phosphate: step 1/1. Its pathway is bacterial outer membrane biogenesis; LPS lipid A biosynthesis. Its function is as follows. Catalyzes the last two sequential reactions in the de novo biosynthetic pathway for UDP-N-acetylglucosamine (UDP-GlcNAc). The C-terminal domain catalyzes the transfer of acetyl group from acetyl coenzyme A to glucosamine-1-phosphate (GlcN-1-P) to produce N-acetylglucosamine-1-phosphate (GlcNAc-1-P), which is converted into UDP-GlcNAc by the transfer of uridine 5-monophosphate (from uridine 5-triphosphate), a reaction catalyzed by the N-terminal domain. The chain is Bifunctional protein GlmU from Cereibacter sphaeroides (strain ATCC 17023 / DSM 158 / JCM 6121 / CCUG 31486 / LMG 2827 / NBRC 12203 / NCIMB 8253 / ATH 2.4.1.) (Rhodobacter sphaeroides).